Here is a 268-residue protein sequence, read N- to C-terminus: GTP cyclohydrolase III (268 aa).

The protein belongs to the archaeal-type GTP cyclohydrolase family. Homotrimer. The cofactor is Mg(2+).

It catalyses the reaction GTP + 3 H2O = 2-amino-5-formylamino-6-(5-phospho-D-ribosylamino)pyrimidin-4(3H)-one + 2 phosphate + 2 H(+). Its function is as follows. Catalyzes the formation of 2-amino-5-formylamino-6-ribofuranosylamino-4(3H)-pyrimidinone ribonucleotide monophosphate and inorganic phosphate from GTP. Also has an independent pyrophosphate phosphohydrolase activity. The chain is GTP cyclohydrolase III (gch3) from Methanocaldococcus jannaschii (strain ATCC 43067 / DSM 2661 / JAL-1 / JCM 10045 / NBRC 100440) (Methanococcus jannaschii).